The sequence spans 136 residues: General odorant-binding protein 57e (136 aa).

The N-terminal stretch at methionine 1 to alanine 20 is a signal peptide. 3 cysteine pairs are disulfide-bonded: cysteine 28/cysteine 61, cysteine 57/cysteine 109, and cysteine 98/cysteine 118.

This sequence belongs to the PBP/GOBP family.

Functionally, present in the aqueous fluid surrounding olfactory sensory dendrites and are thought to aid in the capture and transport of hydrophobic odorants into and through this fluid. This Drosophila melanogaster (Fruit fly) protein is General odorant-binding protein 57e.